A 535-amino-acid polypeptide reads, in one-letter code: Alpha-1,3-mannosyl-glycoprotein 4-beta-N-acetylglucosaminyltransferase A (535 aa).

Over 1-6 (MRLRNG) the chain is Cytoplasmic. Residues 7–27 (TVATVLVFITTFLSLSWYTAW) form a helical; Signal-anchor for type II membrane protein membrane-spanning segment. Residues 28 to 54 (QNGKEKLIAYQREFHALKERLRIAEHR) adopt a coiled-coil conformation. Residues 28–535 (QNGKEKLIAY…NEIHIKKMTN (508 aa)) are Lumenal-facing. N-linked (GlcNAc...) asparagine glycosylation is found at Asn-77, Asn-85, and Asn-458.

It belongs to the glycosyltransferase 54 family. The cofactor is a divalent metal cation. In terms of processing, N-glycosylated.

The protein resides in the golgi apparatus membrane. It is found in the secreted. It catalyses the reaction N(4)-{beta-D-GlcNAc-(1-&gt;2)-alpha-D-Man-(1-&gt;3)-[beta-D-GlcNAc-(1-&gt;2)-alpha-D-Man-(1-&gt;6)]-beta-D-Man-(1-&gt;4)-beta-D-GlcNAc-(1-&gt;4)-beta-D-GlcNAc}-L-asparaginyl-[protein] + UDP-N-acetyl-alpha-D-glucosamine = N(4)-{beta-D-GlcNAc-(1-&gt;2)-[beta-D-GlcNAc-(1-&gt;4)]-alpha-D-Man-(1-&gt;3)-[beta-D-GlcNAc-(1-&gt;2)-alpha-D-Man-(1-&gt;6)]-beta-D-Man-(1-&gt;4)-beta-D-GlcNAc-(1-&gt;4)-beta-D-GlcNAc}-L-asparaginyl-[protein] + UDP + H(+). The enzyme catalyses an N(4)-{beta-D-GlcNAc-(1-&gt;2)-alpha-D-Man-(1-&gt;3)-[alpha-D-Man-(1-&gt;6)]-beta-D-Man-(1-&gt;4)-beta-D-GlcNAc-(1-&gt;4)-beta-D-GlcNAc}-L-asparaginyl-[protein] + UDP-N-acetyl-alpha-D-glucosamine = an N(4)-{beta-D-GlcNAc-(1-&gt;2)-[beta-D-GlcNAc-(1-&gt;4)]-alpha-D-Man-(1-&gt;3)-[alpha-D-Man-(1-&gt;6)]-beta-D-Man-(1-&gt;4)-beta-D-GlcNAc-(1-&gt;4)-beta-D-GlcNAc}-L-asparaginyl-[protein] + UDP + H(+). It carries out the reaction an N(4)-{beta-D-GlcNAc-(1-&gt;2)-alpha-D-Man-(1-&gt;3)-[beta-D-GlcNAc-(1-&gt;2)-[beta-D-GlcNAc-(1-&gt;6)]-alpha-D-Man-(1-&gt;6)]-beta-D-Man-(1-&gt;4)-beta-D-GlcNAc-(1-&gt;4)-beta-D-GlcNAc}-L-asparaginyl-[protein] + UDP-N-acetyl-alpha-D-glucosamine = an N(4)-{beta-D-GlcNAc-(1-&gt;2)-[beta-D-GlcNAc-(1-&gt;4)]-alpha-D-Man-(1-&gt;3)-[beta-D-GlcNAc-(1-&gt;2)-[beta-D-GlcNAc-(1-&gt;6)]-alpha-D-Man-(1-&gt;6)]-beta-D-Man-(1-&gt;4)-beta-D-GlcNAc-(1-&gt;4)-beta-D-GlcNAc}-L-asparaginyl-[protein] + UDP + H(+). The catalysed reaction is an N(4)-{beta-D-GlcNAc-(1-&gt;2)-alpha-D-Man-(1-&gt;3)-[beta-D-GlcNAc-(1-&gt;2)-alpha-D-Man-(1-&gt;6)]-beta-D-Man-(1-&gt;4)-beta-D-GlcNAc-(1-&gt;4)-[alpha-L-Fuc-(1-&gt;6)]-beta-D-GlcNAc}-L-asparaginyl-[protein] + UDP-N-acetyl-alpha-D-glucosamine = N(4)-{beta-D-GlcNAc-(1-&gt;2)-[beta-D-GlcNAc-(1-&gt;4)]-alpha-D-Man-(1-&gt;3)-[beta-D-GlcNAc-(1-&gt;2)-alpha-D-Man-(1-&gt;6)]-beta-D-Man-(1-&gt;4)-beta-D-GlcNAc-(1-&gt;4)-[alpha-L-Fuc-(1-&gt;6)]-beta-D-GlcNAc}-asparaginyl-[protein] + UDP + H(+). It catalyses the reaction an N(4)-{beta-D-GlcNAc-(1-&gt;2)-alpha-D-Man-(1-&gt;3)-[beta-D-Gal-(1-&gt;4)-beta-D-GlcNAc-(1-&gt;2)-alpha-D-Man-(1-&gt;6)]-beta-D-Man-(1-&gt;4)-beta-D-GlcNAc-(1-&gt;4)-beta-D-GlcNAc}-L-asparaginyl-[protein] + UDP-N-acetyl-alpha-D-glucosamine = an N(4)-{beta-D-GlcNAc-(1-&gt;2)-[beta-D-GlcNAc-(1-&gt;4)]-alpha-D-Man-(1-&gt;3)-[beta-D-Gal-(1-&gt;4)-beta-D-GlcNAc-(1-&gt;2)-alpha-D-Man-(1-&gt;6)]-beta-D-Man-(1-&gt;4)-beta-D-GlcNAc-(1-&gt;4)-beta-D-GlcNAc}-L-asparaginyl-[protein] + UDP + H(+). The enzyme catalyses N(4)-{beta-D-GlcNAc-(1-&gt;2)-alpha-D-Man-(1-&gt;3)-[alpha-D-Man-(1-&gt;3)-{alpha-D-Man-(1-&gt;6)}-alpha-D-Man-(1-&gt;6)]-beta-D-Man-(1-&gt;4)-beta-D-GlcNAc-(1-&gt;4)-beta-D-GlcNAc}-asparaginyl-[protein] + UDP-N-acetyl-alpha-D-glucosamine = N(4)-{beta-D-GlcNAc-(1-&gt;2)-[beta-D-GlcNAc-(1-&gt;4)]-alpha-D-Man-(1-&gt;3)-[alpha-D-Man-(1-&gt;3)-{alpha-D-Man-(1-&gt;6)}-alpha-D-Man-(1-&gt;6)]-beta-D-Man-(1-&gt;4)-beta-D-GlcNAc-(1-&gt;4)-beta-D-GlcNAc}-asparaginyl-[protein] + UDP + H(+). It carries out the reaction N(4)-{beta-D-GlcNAc-(1-&gt;2)-alpha-D-Man-(1-&gt;3)-beta-D-Man-(1-&gt;4)-beta-D-GlcNAc-(1-&gt;4)-beta-D-GlcNAc}-asparaginyl-[protein] + UDP-N-acetyl-alpha-D-glucosamine = N(4)-{beta-D-GlcNAc-(1-&gt;2)-[beta-D-GlcNAc-(1-&gt;4)]-alpha-D-Man-(1-&gt;3)-beta-D-Man-(1-&gt;4)-beta-D-GlcNAc-(1-&gt;4)-beta-D-GlcNAc}-asparaginyl-[protein] + UDP + H(+). Its pathway is protein modification; protein glycosylation. Inhibited by UDP. Its function is as follows. Glycosyltransferase that catalyze the transfer of GlcNAc from UDP-GlcNAc to the GlcNAcbeta1-2Manalpha1-3 arm of the core structure of N-linked glycans through a beta1-4 linkage and participates in the production of tri- and tetra-antennary N-linked sugar chains. Involved in glucose transport by mediating SLC2A2/GLUT2 glycosylation, thereby controlling cell-surface expression of SLC2A2 in pancreatic beta cells. This Gallus gallus (Chicken) protein is Alpha-1,3-mannosyl-glycoprotein 4-beta-N-acetylglucosaminyltransferase A.